The following is a 69-amino-acid chain: uncharacterized protein (69 aa).

A signal peptide spans 1–21 (MELLIPLSLLGLYLFSGTRDS). N-linked (GlcNAc...) asparagine glycosylation occurs at asparagine 41.

The protein resides in the secreted. This is an uncharacterized protein from Dictyostelium discoideum (Social amoeba).